Reading from the N-terminus, the 325-residue chain is Elongation factor P--(R)-beta-lysine ligase (325 aa).

Position 76–78 (76–78) interacts with substrate; that stretch reads SPE. Residues 100–102 and Asn109 each bind ATP; that span reads RNE. A substrate-binding site is contributed by Tyr118. Residue 244–245 coordinates ATP; sequence EL. Glu251 is a substrate binding site. Gly300 serves as a coordination point for ATP.

It belongs to the class-II aminoacyl-tRNA synthetase family. EpmA subfamily. In terms of assembly, homodimer.

The catalysed reaction is D-beta-lysine + L-lysyl-[protein] + ATP = N(6)-((3R)-3,6-diaminohexanoyl)-L-lysyl-[protein] + AMP + diphosphate + H(+). With EpmB is involved in the beta-lysylation step of the post-translational modification of translation elongation factor P (EF-P) on 'Lys-34'. Catalyzes the ATP-dependent activation of (R)-beta-lysine produced by EpmB, forming a lysyl-adenylate, from which the beta-lysyl moiety is then transferred to the epsilon-amino group of EF-P 'Lys-34'. The protein is Elongation factor P--(R)-beta-lysine ligase of Salmonella arizonae (strain ATCC BAA-731 / CDC346-86 / RSK2980).